A 154-amino-acid chain; its full sequence is UPF0178 protein SPO3827 (154 aa).

It belongs to the UPF0178 family.

In Ruegeria pomeroyi (strain ATCC 700808 / DSM 15171 / DSS-3) (Silicibacter pomeroyi), this protein is UPF0178 protein SPO3827.